Here is a 464-residue protein sequence, read N- to C-terminus: Probable pectin lyase F (464 aa).

The signal sequence occupies residues 1–20 (MAIIRSVIAATALLGAAVNA). Cys80 and Cys103 are joined by a disulfide. Asn126 is a glycosylation site (N-linked (GlcNAc...) asparagine). Arg252 is a catalytic residue. Residues Cys319 and Cys327 are joined by a disulfide bond. A disordered region spans residues 424–464 (EHEVSTPAVPTPTPVPSSVGSHGSTAGSSHPPAFSRTSFES). The span at 439 to 448 (PSSVGSHGST) shows a compositional bias: low complexity.

This sequence belongs to the polysaccharide lyase 1 family.

It localises to the secreted. It catalyses the reaction Eliminative cleavage of (1-&gt;4)-alpha-D-galacturonan methyl ester to give oligosaccharides with 4-deoxy-6-O-methyl-alpha-D-galact-4-enuronosyl groups at their non-reducing ends.. In terms of biological role, pectinolytic enzymes consist of four classes of enzymes: pectin lyase, polygalacturonase, pectin methylesterase and rhamnogalacturonase. Among pectinolytic enzymes, pectin lyase is the most important in depolymerization of pectin, since it cleaves internal glycosidic bonds of highly methylated pectins. The protein is Probable pectin lyase F (pelF) of Emericella nidulans (strain FGSC A4 / ATCC 38163 / CBS 112.46 / NRRL 194 / M139) (Aspergillus nidulans).